Reading from the N-terminus, the 115-residue chain is Large ribosomal subunit protein bL19 (115 aa).

It belongs to the bacterial ribosomal protein bL19 family.

Functionally, this protein is located at the 30S-50S ribosomal subunit interface and may play a role in the structure and function of the aminoacyl-tRNA binding site. The polypeptide is Large ribosomal subunit protein bL19 (Streptococcus mutans serotype c (strain ATCC 700610 / UA159)).